A 154-amino-acid chain; its full sequence is Myoglobin (154 aa).

Residues 2–148 enclose the Globin domain; it reads GLSDGEWQLV…FRNDMAAQYK (147 aa). Position 4 is a phosphoserine (serine 4). Residue histidine 65 coordinates nitrite. Histidine 65 provides a ligand contact to O2. Threonine 68 carries the post-translational modification Phosphothreonine. Position 94 (histidine 94) interacts with heme b.

The protein belongs to the globin family. In terms of assembly, monomeric.

The protein resides in the cytoplasm. Its subcellular location is the sarcoplasm. The catalysed reaction is Fe(III)-heme b-[protein] + nitric oxide + H2O = Fe(II)-heme b-[protein] + nitrite + 2 H(+). The enzyme catalyses H2O2 + AH2 = A + 2 H2O. In terms of biological role, monomeric heme protein which primary function is to store oxygen and facilitate its diffusion within muscle tissues. Reversibly binds oxygen through a pentacoordinated heme iron and enables its timely and efficient release as needed during periods of heightened demand. Depending on the oxidative conditions of tissues and cells, and in addition to its ability to bind oxygen, it also has a nitrite reductase activity whereby it regulates the production of bioactive nitric oxide. Under stress conditions, like hypoxia and anoxia, it also protects cells against reactive oxygen species thanks to its pseudoperoxidase activity. This Bos mutus grunniens (Wild yak) protein is Myoglobin (MB).